The following is a 643-amino-acid chain: Threonine--tRNA ligase (643 aa).

The TGS domain occupies 3–64; the sequence is DMINITFPDG…QEDGAVEIIT (62 aa). The interval 245–542 is catalytic; it reads DHRKLGKELK…LIEEHKGALP (298 aa). Zn(2+) contacts are provided by Cys-338, His-389, and His-519.

This sequence belongs to the class-II aminoacyl-tRNA synthetase family. Homodimer. Zn(2+) serves as cofactor.

Its subcellular location is the cytoplasm. The catalysed reaction is tRNA(Thr) + L-threonine + ATP = L-threonyl-tRNA(Thr) + AMP + diphosphate + H(+). Catalyzes the attachment of threonine to tRNA(Thr) in a two-step reaction: L-threonine is first activated by ATP to form Thr-AMP and then transferred to the acceptor end of tRNA(Thr). Also edits incorrectly charged L-seryl-tRNA(Thr). This Bacillus velezensis (strain DSM 23117 / BGSC 10A6 / LMG 26770 / FZB42) (Bacillus amyloliquefaciens subsp. plantarum) protein is Threonine--tRNA ligase.